Consider the following 125-residue polypeptide: Glucose-1-phosphate adenylyltransferase small subunit (125 aa).

Belongs to the bacterial/plant glucose-1-phosphate adenylyltransferase family. As to quaternary structure, heterotetramer. In terms of tissue distribution, leaves.

The protein localises to the plastid. It is found in the chloroplast. Its subcellular location is the amyloplast. It carries out the reaction alpha-D-glucose 1-phosphate + ATP + H(+) = ADP-alpha-D-glucose + diphosphate. Its pathway is glycan biosynthesis; starch biosynthesis. Activated by 3'phosphoglycerate, inhibited by orthophosphate. Allosteric regulation. Its function is as follows. This protein plays a role in synthesis of starch. It catalyzes the synthesis of the activated glycosyl donor, ADP-glucose from Glc-1-P and ATP. This chain is Glucose-1-phosphate adenylyltransferase small subunit (GLG1), found in Zea mays (Maize).